A 222-amino-acid chain; its full sequence is Holliday junction branch migration complex subunit RuvA (222 aa).

The interval 1–67 (MISWLNGLKI…EDGSQLIGFL (67 aa)) is domain I. Positions 68 to 146 (NKLERDLFRK…DLIGSSLKKT (79 aa)) are domain II. The interval 147–155 (NNHLELEYE) is flexible linker. The domain III stretch occupies residues 155-222 (ETNVADEVRS…TLIRINTESG (68 aa)).

Belongs to the RuvA family. Homotetramer. Forms an RuvA(8)-RuvB(12)-Holliday junction (HJ) complex. HJ DNA is sandwiched between 2 RuvA tetramers; dsDNA enters through RuvA and exits via RuvB. An RuvB hexamer assembles on each DNA strand where it exits the tetramer. Each RuvB hexamer is contacted by two RuvA subunits (via domain III) on 2 adjacent RuvB subunits; this complex drives branch migration. In the full resolvosome a probable DNA-RuvA(4)-RuvB(12)-RuvC(2) complex forms which resolves the HJ.

The protein localises to the cytoplasm. The RuvA-RuvB-RuvC complex processes Holliday junction (HJ) DNA during genetic recombination and DNA repair, while the RuvA-RuvB complex plays an important role in the rescue of blocked DNA replication forks via replication fork reversal (RFR). RuvA specifically binds to HJ cruciform DNA, conferring on it an open structure. The RuvB hexamer acts as an ATP-dependent pump, pulling dsDNA into and through the RuvAB complex. HJ branch migration allows RuvC to scan DNA until it finds its consensus sequence, where it cleaves and resolves the cruciform DNA. The chain is Holliday junction branch migration complex subunit RuvA from Prochlorococcus marinus (strain SARG / CCMP1375 / SS120).